We begin with the raw amino-acid sequence, 292 residues long: Polyketide transferase af380 (292 aa).

The interval 46 to 267 is abhydrolase domain; sequence DVAVWFQQQG…FDLVAGRGHM (222 aa).

It belongs to the polyketide transferase af380 family.

The enzyme catalyses fumagillol + dodecapentaneoyl-[polyketide synthase] = prefumagillin + holo-[polyketide synthase]. It participates in secondary metabolite biosynthesis; terpenoid biosynthesis. In terms of biological role, polyketide transferase; part of the gene cluster that mediates the biosynthesis of fumagillin, a meroterpenoid that has numerous biological activities including irreversible inhibition of human type 2 methionine aminopeptidase (METAP2). Within the pathway, the polyketide transferase af380 catalyzes the transfer of a dodecapentaenoyl group synthesized by the polyketide synthase af370 onto 5R-hydroxy-seco-sesquiterpene to produce prefumagillin. The pathway begins with the conversion of farnesyl pyrophosphate (FPP) to beta-trans-bergamotene by the membrane-bound beta-trans-bergamotene synthase af520. The multifunctional cytochrome P450 monooxygenase af510 then converts beta-trans-bergamotene into 5-keto-demethoxyfumagillol via several oxydation steps. 5-keto-demethoxyfumagillol is then subjected to successive C-6 hydroxylation and O-methylation by the dioxygenase af480 and O-methyltransferase af390-400, respectively, to yield 5-keto-fumagillol, which is then stereoselectively reduced by the keto-reductase af490 to 5R-hydroxy-seco-sesquiterpene. The next step is the polyketide transferase af380-catalyzed transfer of a dodecapentaenoyl group synthesized by the polyketide synthase af370 onto 5R-hydroxy-seco-sesquiterpene which leads to the production of prefumagillin. Finally, oxidative cleavage by the monooxygenase af470 converts prefumagillin to fumagillin. The sequence is that of Polyketide transferase af380 from Aspergillus fumigatus (strain ATCC MYA-4609 / CBS 101355 / FGSC A1100 / Af293) (Neosartorya fumigata).